The sequence spans 124 residues: Small ribosomal subunit protein uS10 (124 aa).

It belongs to the universal ribosomal protein uS10 family.

The polypeptide is Small ribosomal subunit protein uS10 (rps20) (Dictyostelium discoideum (Social amoeba)).